Consider the following 227-residue polypeptide: Cytochrome c oxidase subunit 2 (227 aa).

Topologically, residues 1–26 (MNTWMNFNLQNSNSPLMEQLMFFHNH) are mitochondrial intermembrane. Residues 27 to 48 (SMLIILLITILVGYIMSSLLYN) form a helical membrane-spanning segment. At 49–62 (KLYNRYLLESQNVE) the chain is on the mitochondrial matrix side. A helical membrane pass occupies residues 63-82 (IIWTILPAFMLIFIALPSLR). Over 83–227 (LLYLLDDSNS…SFIKWISSNS (145 aa)) the chain is Mitochondrial intermembrane. The Cu cation site is built by His161, Cys196, Glu198, Cys200, His204, and Met207. Glu198 is a binding site for Mg(2+).

This sequence belongs to the cytochrome c oxidase subunit 2 family. Component of the cytochrome c oxidase (complex IV, CIV), a multisubunit enzyme composed of a catalytic core of 3 subunits and several supernumerary subunits. The complex exists as a monomer or a dimer and forms supercomplexes (SCs) in the inner mitochondrial membrane with ubiquinol-cytochrome c oxidoreductase (cytochrome b-c1 complex, complex III, CIII). The cofactor is Cu cation.

The protein localises to the mitochondrion inner membrane. It carries out the reaction 4 Fe(II)-[cytochrome c] + O2 + 8 H(+)(in) = 4 Fe(III)-[cytochrome c] + 2 H2O + 4 H(+)(out). Its function is as follows. Component of the cytochrome c oxidase, the last enzyme in the mitochondrial electron transport chain which drives oxidative phosphorylation. The respiratory chain contains 3 multisubunit complexes succinate dehydrogenase (complex II, CII), ubiquinol-cytochrome c oxidoreductase (cytochrome b-c1 complex, complex III, CIII) and cytochrome c oxidase (complex IV, CIV), that cooperate to transfer electrons derived from NADH and succinate to molecular oxygen, creating an electrochemical gradient over the inner membrane that drives transmembrane transport and the ATP synthase. Cytochrome c oxidase is the component of the respiratory chain that catalyzes the reduction of oxygen to water. Electrons originating from reduced cytochrome c in the intermembrane space (IMS) are transferred via the dinuclear copper A center (CU(A)) of subunit 2 and heme A of subunit 1 to the active site in subunit 1, a binuclear center (BNC) formed by heme A3 and copper B (CU(B)). The BNC reduces molecular oxygen to 2 water molecules using 4 electrons from cytochrome c in the IMS and 4 protons from the mitochondrial matrix. This Ctenocephalides felis (Cat flea) protein is Cytochrome c oxidase subunit 2 (COII).